Consider the following 150-residue polypeptide: MRIWIDADACPKAAKDLIVKFALKRKLEVVMVAGQAVAKPAFAVVRLIVVPSGMDAADDYLVEHAVPGELVICSDVPLADRLIKKGVAALDPRGREFDERNMGDRLAVRNLFTELREQGQAGGGQGPYGEREKQAFANALDRILARLAKG.

This sequence belongs to the UPF0178 family.

The chain is UPF0178 protein PputW619_5044 from Pseudomonas putida (strain W619).